The following is a 448-amino-acid chain: Phosphoglucosamine mutase (448 aa).

Ser100 (phosphoserine intermediate) is an active-site residue. Positions 100, 240, 242, and 244 each coordinate Mg(2+). Ser100 bears the Phosphoserine mark.

Belongs to the phosphohexose mutase family. It depends on Mg(2+) as a cofactor. Post-translationally, activated by phosphorylation.

The catalysed reaction is alpha-D-glucosamine 1-phosphate = D-glucosamine 6-phosphate. Its function is as follows. Catalyzes the conversion of glucosamine-6-phosphate to glucosamine-1-phosphate. The sequence is that of Phosphoglucosamine mutase from Bacillus cereus (strain ATCC 10987 / NRS 248).